A 344-amino-acid chain; its full sequence is BURP domain-containing protein 16 (344 aa).

An N-terminal signal peptide occupies residues Met-1–Ala-25. 4 N-linked (GlcNAc...) asparagine glycosylation sites follow: Asn-90, Asn-120, Asn-181, and Asn-333. The 214-residue stretch at Phe-128–Ala-341 folds into the BURP domain.

As to expression, expressed in roots, stems, leaves and panicles.

The polypeptide is BURP domain-containing protein 16 (BURP16) (Oryza sativa subsp. japonica (Rice)).